Here is a 97-residue protein sequence, read N- to C-terminus: Lipolysis-activating peptide 1-alpha chain (97 aa).

The signal sequence occupies residues 1–21 (MNITLFCSVFILISLAGLSVS). Positions 25–88 (PGNYPMSLYG…FWAAHKNHCK (64 aa)) constitute an LCN-type CS-alpha/beta domain. Cystine bridges form between Cys39-Cys62, Cys48-Cys67, and Cys52-Cys69.

The protein belongs to the long (3 C-C) scorpion toxin superfamily. Monomer (edited version) and heterodimer (non-edited version) of this alpha chain and a beta chain (AC D9U2A2). In terms of tissue distribution, expressed by the venom gland.

The protein resides in the secreted. In terms of biological role, the heterodimer non-edited LVP1 induces lipolysis in rat adipocytes. Induction of lipolysis by LVP1 appears to be mediated through the beta-2 adrenergic receptor pathway (ADRB2). Functionally, the edited BmKBTx-like, similar to beta-toxins, may modulate voltage-gated sodium channels (Nav) and may block voltage-gated potassium channels (Kv). The protein is Lipolysis-activating peptide 1-alpha chain of Lychas mucronatus (Chinese swimming scorpion).